An 82-amino-acid chain; its full sequence is Beta-defensin 113 (82 aa).

Residues 1-16 (MKILCIFLTFFFTVSC) form the signal peptide. 3 cysteine pairs are disulfide-bonded: C35-C61, C42-C56, and C46-C62.

This sequence belongs to the beta-defensin family.

It localises to the secreted. In terms of biological role, has antibacterial activity. In Pan troglodytes (Chimpanzee), this protein is Beta-defensin 113 (DEFB113).